The sequence spans 1940 residues: Myosin-13 (1940 aa).

The Myosin N-terminal SH3-like domain occupies 33–82 (DSKKACFAMDDKEMYVKGMIQSRENDKVTVKTLDDRTLTLNSDQVFPMNP). One can recognise a Myosin motor domain in the interval 86-782 (DKIEDMAMMT…LLGLLEEMRD (697 aa)). Residue K130 is modified to N6,N6,N6-trimethyllysine. Residue 179 to 186 (GESGAGKT) coordinates ATP. Actin-binding stretches follow at residues 659 to 681 (LNKL…IPNE) and 761 to 775 (RFGH…GLLG). In terms of domain architecture, IQ spans 785–814 (LVTLMTRTQAICRGYLMRVEFKKMMERRES). A coiled-coil region spans residues 843 to 1940 (LLKSAEAERE…RDVGAQKMEE (1098 aa)). The segment at 1886-1940 (RQAEEAEEQANTQMSKCRRVQHELEEAEERADIAESQVNKLRAKSRDVGAQKMEE) is disordered. Basic and acidic residues predominate over residues 1929-1940 (KSRDVGAQKMEE).

It belongs to the TRAFAC class myosin-kinesin ATPase superfamily. Myosin family. In terms of assembly, muscle myosin is a hexameric protein that consists of 2 heavy chain subunits (MHC), 2 alkali light chain subunits (MLC) and 2 regulatory light chain subunits (MLC-2).

The protein localises to the cytoplasm. Its subcellular location is the myofibril. Fast twitching myosin mediating the high-velocity and low-tension contractions of specific striated muscles. The protein is Myosin-13 (MYH13) of Canis lupus familiaris (Dog).